A 69-amino-acid chain; its full sequence is Alpha-conotoxin Mr1.7a (69 aa).

Positions 1-21 are cleaved as a signal peptide; that stretch reads MGMRMMFTVFLLVVLATTVVS. Residues 22–49 constitute a propeptide that is removed on maturation; sequence FTSNRVLDPAFRRRNAAAKASDLIALNA. Residues Pro52 and Pro58 each carry the 4-hydroxyproline; in Mr1.7b modification. 2 cysteine pairs are disulfide-bonded: Cys54–Cys60 and Cys55–Cys68. Positions 56–58 are lacks the Ser-Xaa-Pro motif that is crucial for potent interaction with nAChR; that stretch reads THP. Position 68 is a cysteine amide (Cys68).

It belongs to the conotoxin A superfamily. Two 4-hydroxyprolines have been detected by MS but the assignment of which of the three prolines is modified is uncertain. Expressed by the venom duct.

Its subcellular location is the secreted. Its function is as follows. Acts as a co-agonist with PNU (an alpha-7 nAChR-selective allosteric modulator) at the endogenous alpha-7/CHRNA7 nicotinic acetylcholine receptors (nAChR) when tested in human SH-SY5Y neuroblastoma cells. Is the third alpha-conotoxin that acts as an agonist (after alpha-conotoxin SrIA/SrIB). Also acts as an antagonist at human alpha-7 nAChRs heterologously expressed in Xenopus oocytes. Has possibly a distinct nAChR binding mode from other alpha-conotoxins, due to a different three residue motif (lacks the Ser-Xaa-Pro motif). Acts as a weak partial agonist at alpha-7/CHRNA7 nicotinic acetylcholine receptors (nAChR) when tested in human SH-SY5Y neuroblastoma cells. Has possibly a distinct nAChR binding mode from other alpha-conotoxins, due to a different three residue motif (lacks the Ser-Xaa-Pro motif). This Conus marmoreus (Marble cone) protein is Alpha-conotoxin Mr1.7a.